The primary structure comprises 288 residues: ATP synthase gamma chain (288 aa).

Belongs to the ATPase gamma chain family. F-type ATPases have 2 components, CF(1) - the catalytic core - and CF(0) - the membrane proton channel. CF(1) has five subunits: alpha(3), beta(3), gamma(1), delta(1), epsilon(1). CF(0) has three main subunits: a, b and c.

It localises to the cell inner membrane. Functionally, produces ATP from ADP in the presence of a proton gradient across the membrane. The gamma chain is believed to be important in regulating ATPase activity and the flow of protons through the CF(0) complex. In Chromobacterium violaceum (strain ATCC 12472 / DSM 30191 / JCM 1249 / CCUG 213 / NBRC 12614 / NCIMB 9131 / NCTC 9757 / MK), this protein is ATP synthase gamma chain.